The chain runs to 422 residues: Tyrosine--tRNA ligase (422 aa).

An L-tyrosine-binding site is contributed by Tyr-35. The 'HIGH' region motif lies at 40 to 49 (PTAPSLHLGN). L-tyrosine is bound by residues Tyr-170 and Gln-174. The 'KMSKS' region motif lies at 231-235 (KFGKT). Lys-234 provides a ligand contact to ATP. The S4 RNA-binding domain maps to 353-419 (APVVDLFAEV…GKKNLAAVEV (67 aa)).

Belongs to the class-I aminoacyl-tRNA synthetase family. TyrS type 1 subfamily. In terms of assembly, homodimer.

It localises to the cytoplasm. The enzyme catalyses tRNA(Tyr) + L-tyrosine + ATP = L-tyrosyl-tRNA(Tyr) + AMP + diphosphate + H(+). In terms of biological role, catalyzes the attachment of tyrosine to tRNA(Tyr) in a two-step reaction: tyrosine is first activated by ATP to form Tyr-AMP and then transferred to the acceptor end of tRNA(Tyr). The polypeptide is Tyrosine--tRNA ligase (Streptomyces avermitilis (strain ATCC 31267 / DSM 46492 / JCM 5070 / NBRC 14893 / NCIMB 12804 / NRRL 8165 / MA-4680)).